The sequence spans 205 residues: Methylthioribulose-1-phosphate dehydratase (205 aa).

His-96 and His-98 together coordinate Zn(2+).

The protein belongs to the aldolase class II family. MtnB subfamily. Requires Zn(2+) as cofactor.

The enzyme catalyses 5-(methylsulfanyl)-D-ribulose 1-phosphate = 5-methylsulfanyl-2,3-dioxopentyl phosphate + H2O. Its pathway is amino-acid biosynthesis; L-methionine biosynthesis via salvage pathway; L-methionine from S-methyl-5-thio-alpha-D-ribose 1-phosphate: step 2/6. Functionally, catalyzes the dehydration of methylthioribulose-1-phosphate (MTRu-1-P) into 2,3-diketo-5-methylthiopentyl-1-phosphate (DK-MTP-1-P). The protein is Methylthioribulose-1-phosphate dehydratase of Pseudomonas aeruginosa (strain ATCC 15692 / DSM 22644 / CIP 104116 / JCM 14847 / LMG 12228 / 1C / PRS 101 / PAO1).